The sequence spans 412 residues: Tyrosine--tRNA ligase (412 aa).

Tyr31 is an L-tyrosine binding site. Positions 36–45 (PTAPSLHIGH) match the 'HIGH' region motif. Residues Tyr162 and Gln166 each contribute to the L-tyrosine site. The short motif at 222–226 (KIGKT) is the 'KMSKS' region element. Lys225 contacts ATP. The 67-residue stretch at 345–411 (KRWLDIVVEL…GKRKKQVIDL (67 aa)) folds into the S4 RNA-binding domain.

This sequence belongs to the class-I aminoacyl-tRNA synthetase family. TyrS type 1 subfamily. In terms of assembly, homodimer.

The protein resides in the cytoplasm. The catalysed reaction is tRNA(Tyr) + L-tyrosine + ATP = L-tyrosyl-tRNA(Tyr) + AMP + diphosphate + H(+). Its function is as follows. Catalyzes the attachment of tyrosine to tRNA(Tyr) in a two-step reaction: tyrosine is first activated by ATP to form Tyr-AMP and then transferred to the acceptor end of tRNA(Tyr). This chain is Tyrosine--tRNA ligase, found in Chlamydia trachomatis serovar A (strain ATCC VR-571B / DSM 19440 / HAR-13).